The chain runs to 311 residues: Putative mitochondrial transporter UCP3 (311 aa).

Residues 1 to 10 lie on the Mitochondrial intermembrane side of the membrane; the sequence is MVGLQPSERP. The helical transmembrane segment at 11–32 threads the bilayer; it reads PTTSVKFLAAGTAACFADLLTF. Solcar repeat units lie at residues 11-105, 114-205, and 214-299; these read PTTS…VKQF, SSII…IKEK, and DNFP…MKRA. At 33–76 the chain is on the mitochondrial matrix side; the sequence is PLDTAKVRLQIQGENQAALAARSAQYRGVLGTILTMVRTEGPRS. The chain crosses the membrane as a helical span at residues 77 to 99; that stretch reads LYSGLVAGLQRQMSFASIRIGLY. At 100–119 the chain is on the mitochondrial intermembrane side; the sequence is DSVKQFYTPKGSDHSSIITR. The chain crosses the membrane as a helical span at residues 120–136; sequence ILAGCTTGAMAVTCAQP. Residues 137-182 lie on the Mitochondrial matrix side of the membrane; that stretch reads TDVVKIRFQASMHTGLGGNRKYSGTMDAYRTIAREEGVRGLWKGIL. The chain crosses the membrane as a helical span at residues 183-199; that stretch reads PNITRNAIVNCGEMVTY. At 200-216 the chain is on the mitochondrial intermembrane side; that stretch reads DIIKEKLLDYHLLTDNF. The helical transmembrane segment at 217–236 threads the bilayer; sequence PCHFVSAFGAGFCATLVASP. At 237-270 the chain is on the mitochondrial matrix side; that stretch reads VDVVKTRYMNSPPGQYHSPFDCMLKMVTQEGPTA. A helical membrane pass occupies residues 271-293; it reads FYKGFTPSFLRLGSWNVVMFVTY. Positions 278-300 are purine nucleotide binding; that stretch reads SFLRLGSWNVVMFVTYEQMKRAL. Over 294-311 the chain is Mitochondrial intermembrane; sequence EQMKRALMKVQMLRDSPF.

The protein belongs to the mitochondrial carrier (TC 2.A.29) family. Interacts with HAX1; the interaction is direct and calcium-dependent.

The protein localises to the mitochondrion inner membrane. Its function is as follows. Putative transmembrane transporter that plays a role in mitochondrial metabolism via an as yet unclear mechanism. Originally, this mitochondrial protein was thought to act as a proton transmembrane transporter from the mitochondrial intermembrane space into the matrix, causing proton leaks through the inner mitochondrial membrane, thereby uncoupling mitochondrial membrane potential generation from ATP synthesis. However, this function is controversial and uncoupling may not be the function, or at least not the main function, but rather a consequence of more conventional metabolite transporter activity. The polypeptide is Putative mitochondrial transporter UCP3 (Bos taurus (Bovine)).